Consider the following 279-residue polypeptide: MAFQGTSRTLTQQSSAASSDDLQKILFSPDAIKKMATECDLGRHHWMRADNAISVRPLVPQVTSNNLLSFFKSGYDAGELRSKGYMSVPQVLCAVTRTVSTDAEGSLKIYLADLGDKELSPIDGQCVTLHNHELPALISFQPTYDCPMELVGNRHRCFAVVVERHGYIGYGGTTASVCSNWQAQFSSKNNNYTHAAAGKTLVLPYNRLAEHSKPSAVARLLKSQLNNVSSSRYLLPNVALNQNASGHESEILNESPPFAIGSPSASRNNSFRSQVVNGL.

Residues 255-279 (SPPFAIGSPSASRNNSFRSQVVNGL) form a disordered region. The segment covering 263 to 279 (PSASRNNSFRSQVVNGL) has biased composition (polar residues).

The protein belongs to the cucumovirus movement protein family.

The protein resides in the host cell junction. Its subcellular location is the host plasmodesma. Its function is as follows. Transports viral genome to neighboring plant cells directly through plasmosdesmata, without any budding. The movement protein allows efficient cell to cell propagation, by bypassing the host cell wall barrier. Acts by forming a tubular structure at the host plasmodesmata, enlarging it enough to allow free passage of virion capsids. This is Movement protein from Cucumis sativus (Cucumber).